The sequence spans 230 residues: Large ribosomal subunit protein uL1 (230 aa).

Belongs to the universal ribosomal protein uL1 family. As to quaternary structure, part of the 50S ribosomal subunit.

Its function is as follows. Binds directly to 23S rRNA. The L1 stalk is quite mobile in the ribosome, and is involved in E site tRNA release. In terms of biological role, protein L1 is also a translational repressor protein, it controls the translation of the L11 operon by binding to its mRNA. This is Large ribosomal subunit protein uL1 from Afipia carboxidovorans (strain ATCC 49405 / DSM 1227 / KCTC 32145 / OM5) (Oligotropha carboxidovorans).